We begin with the raw amino-acid sequence, 228 residues long: Vesicle transport protein SEC20 (228 aa).

The Cytoplasmic segment spans residues 1 to 199 (MAAPQDVHVR…LITKYNRREL (199 aa)). A coiled-coil region spans residues 37 to 90 (LSELTELNTKVKEKFQQLKHRIQELEQSAKEQDKESEKQLLLQEVENHKKQMLS). The chain crosses the membrane as a helical; Anchor for type IV membrane protein span at residues 200-220 (TDKLLIFLALALFLATVLYIV). Topologically, residues 221–228 (KKRLFPFL) are lumenal.

Belongs to the SEC20 family. As to quaternary structure, component of a SNARE complex consisting of STX18, USE1L, BNIP1/SEC20L and SEC22B. Interacts directly with STX18, RINT1/TIP20L and NAPA. Interacts with ZW10 through RINT1. Interacts with BCL2. Interacts with RNF186. Interacts with RNF185. Interacts with SQSTM1; increased by 'Lys-63'-linked polyubiquitination of BNIP1. Post-translationally, polyubiquitinated. 'Lys-63'-linked polyubiquitination by RNF185 increases the interaction with the autophagy receptor SQSTM1. Undergoes 'Lys-29'- and 'Lys-63'-linked polyubiquitination by RNF186 that may regulate BNIP1 localization to the mitochondrion.

It is found in the endoplasmic reticulum membrane. It localises to the mitochondrion membrane. Functionally, as part of a SNARE complex may be involved in endoplasmic reticulum membranes fusion and be required for the maintenance of endoplasmic reticulum organization. Also plays a role in apoptosis. It is for instance required for endoplasmic reticulum stress-induced apoptosis. As a substrate of RNF185 interacting with SQSTM1, might also be involved in mitochondrial autophagy. This Rattus norvegicus (Rat) protein is Vesicle transport protein SEC20.